A 445-amino-acid polypeptide reads, in one-letter code: GTPase Der (445 aa).

EngA-type G domains lie at 3–167 and 180–353; these read PVIA…YAGQ and IKIA…AAAM. GTP-binding positions include 9–16, 56–60, 119–122, 186–193, 233–237, and 298–301; these read GRPNVGKS, DTGGF, NKAE, DTAGL, and NKWD. The KH-like domain maps to 354 to 438; sequence AKLPTPKLTR…PLRIEFRSSN (85 aa).

The protein belongs to the TRAFAC class TrmE-Era-EngA-EngB-Septin-like GTPase superfamily. EngA (Der) GTPase family. Associates with the 50S ribosomal subunit.

Its function is as follows. GTPase that plays an essential role in the late steps of ribosome biogenesis. This is GTPase Der from Burkholderia vietnamiensis (strain G4 / LMG 22486) (Burkholderia cepacia (strain R1808)).